The following is a 169-amino-acid chain: Orotate phosphoribosyltransferase (169 aa).

5-phospho-alpha-D-ribose 1-diphosphate is bound by residues Arg-86, Lys-90, His-92, and 111–119; that span reads EDVTTSGGS. Residues Thr-115 and Arg-143 each coordinate orotate.

It belongs to the purine/pyrimidine phosphoribosyltransferase family. PyrE subfamily. In terms of assembly, homodimer. Mg(2+) is required as a cofactor.

It catalyses the reaction orotidine 5'-phosphate + diphosphate = orotate + 5-phospho-alpha-D-ribose 1-diphosphate. Its pathway is pyrimidine metabolism; UMP biosynthesis via de novo pathway; UMP from orotate: step 1/2. Catalyzes the transfer of a ribosyl phosphate group from 5-phosphoribose 1-diphosphate to orotate, leading to the formation of orotidine monophosphate (OMP). The sequence is that of Orotate phosphoribosyltransferase from Methanocorpusculum labreanum (strain ATCC 43576 / DSM 4855 / Z).